A 229-amino-acid chain; its full sequence is tRNA (guanine-N(7)-)-methyltransferase (229 aa).

The S-adenosyl-L-methionine site is built by glutamate 59, glutamate 84, aspartate 111, and aspartate 134. Aspartate 134 is a catalytic residue. Substrate-binding positions include lysine 138, aspartate 170, and threonine 205–glutamate 208.

Belongs to the class I-like SAM-binding methyltransferase superfamily. TrmB family.

It carries out the reaction guanosine(46) in tRNA + S-adenosyl-L-methionine = N(7)-methylguanosine(46) in tRNA + S-adenosyl-L-homocysteine. It participates in tRNA modification; N(7)-methylguanine-tRNA biosynthesis. Catalyzes the formation of N(7)-methylguanine at position 46 (m7G46) in tRNA. This Nitrosospira multiformis (strain ATCC 25196 / NCIMB 11849 / C 71) protein is tRNA (guanine-N(7)-)-methyltransferase.